The primary structure comprises 433 residues: Cell adhesion molecule 2 (433 aa).

An N-terminal signal peptide occupies residues 1 to 24 (MILQPSALLCLSSLWGVIVQASQG). Topologically, residues 25 to 365 (QFPVTQNVTV…ALPGPVATDH (341 aa)) are extracellular. Positions 27 to 114 (PVTQNVTVVE…SLFTMPVKTS (88 aa)) constitute an Ig-like V-type domain. N-linked (GlcNAc...) asparagine glycosylation is found at Asn-31, Asn-41, and Asn-51. 3 disulfides stabilise this stretch: Cys-44/Cys-104, Cys-146/Cys-203, and Cys-248/Cys-296. 2 Ig-like C2-type domains span residues 127–217 (PHIS…PQIA) and 227–312 (PTVR…YVLI). Residues Asn-287 and Asn-291 are each glycosylated (N-linked (GlcNAc...) asparagine). A helical transmembrane segment spans residues 366–386 (ALIGGVVAVVVFVTLCSIILI). The Cytoplasmic portion of the chain corresponds to 387 to 433 (GRYLARHKGTYLTNEAKGAEDAPDADTAIINAEGSQVNAEEKKEYFI).

It belongs to the nectin family.

The protein resides in the membrane. The chain is Cell adhesion molecule 2 (cadm2) from Xenopus tropicalis (Western clawed frog).